The chain runs to 1150 residues: Rho-type GTPase-activating protein 1 (1150 aa).

Basic and acidic residues predominate over residues 1–10; sequence MSQRDAKKDG. Residues 1-78 form a disordered region; it reads MSQRDAKKDG…AESRKALPNQ (78 aa). Positions 40–62 are enriched in polar residues; that stretch reads TTKNFPHSRHTSTVAGTEGGSSL. LIM zinc-binding domains follow at residues 114-177, 178-238, and 483-546; these read KICA…RRLD, LLCA…LFAA, and DLCY…SSNV. The tract at residues 586–683 is disordered; it reads SQRKPLSVDP…SHGGSITGKS (98 aa). Positions 598–617 are enriched in polar residues; it reads ENVSSTVETAKQAETTASSD. Positions 642–655 are enriched in low complexity; it reads SNETQSSSNSTETS. Serine 690 is subject to Phosphoserine. Positions 726–759 are disordered; it reads AFRHMPSYTDPSYRKNSGAIYDKNDGTQKGLTPK. The 202-residue stretch at 837–1038 folds into the Rho-GAP domain; sequence VPLEILVERN…LLIENFEKFC (202 aa). Disordered regions lie at residues 1078-1097 and 1104-1150; these read LDER…RQPI and LTSD…IRDS. The segment covering 1088–1097 has biased composition (basic residues); it reads ASTKRKRQPI. Polar residues predominate over residues 1104 to 1134; it reads LTSDVPSGSEVADTNSLSSTTKDEASPNSDA.

The protein localises to the cell tip. It localises to the nucleus. In terms of biological role, GTPase-activating protein for Rho1. Involved in the F-actin patch localization, cell morphogenesis, regulation of septation, and cell wall synthesis. The protein is Rho-type GTPase-activating protein 1 (rga1) of Schizosaccharomyces pombe (strain 972 / ATCC 24843) (Fission yeast).